The primary structure comprises 90 residues: Cell division topological specificity factor (90 aa).

The disordered stretch occupies residues 1-21 (MAGFWSKIFGNDEKPSSAQTA). Positions 10-21 (GNDEKPSSAQTA) are enriched in basic and acidic residues.

The protein belongs to the MinE family.

Prevents the cell division inhibition by proteins MinC and MinD at internal division sites while permitting inhibition at polar sites. This ensures cell division at the proper site by restricting the formation of a division septum at the midpoint of the long axis of the cell. This chain is Cell division topological specificity factor, found in Acinetobacter baylyi (strain ATCC 33305 / BD413 / ADP1).